We begin with the raw amino-acid sequence, 282 residues long: Acetyl-coenzyme A carboxylase carboxyl transferase subunit beta (282 aa).

Residues leucine 29 to aspartate 282 form the CoA carboxyltransferase N-terminal domain. Zn(2+) contacts are provided by cysteine 33, cysteine 36, cysteine 51, and cysteine 54. The C4-type zinc-finger motif lies at cysteine 33–cysteine 54.

It belongs to the AccD/PCCB family. As to quaternary structure, acetyl-CoA carboxylase is a heterohexamer composed of biotin carboxyl carrier protein (AccB), biotin carboxylase (AccC) and two subunits each of ACCase subunit alpha (AccA) and ACCase subunit beta (AccD). Zn(2+) is required as a cofactor.

Its subcellular location is the cytoplasm. It catalyses the reaction N(6)-carboxybiotinyl-L-lysyl-[protein] + acetyl-CoA = N(6)-biotinyl-L-lysyl-[protein] + malonyl-CoA. It participates in lipid metabolism; malonyl-CoA biosynthesis; malonyl-CoA from acetyl-CoA: step 1/1. Component of the acetyl coenzyme A carboxylase (ACC) complex. Biotin carboxylase (BC) catalyzes the carboxylation of biotin on its carrier protein (BCCP) and then the CO(2) group is transferred by the transcarboxylase to acetyl-CoA to form malonyl-CoA. In Lactobacillus delbrueckii subsp. bulgaricus (strain ATCC 11842 / DSM 20081 / BCRC 10696 / JCM 1002 / NBRC 13953 / NCIMB 11778 / NCTC 12712 / WDCM 00102 / Lb 14), this protein is Acetyl-coenzyme A carboxylase carboxyl transferase subunit beta.